Here is a 72-residue protein sequence, read N- to C-terminus: Translation initiation factor IF-1 (72 aa).

The S1-like domain maps to 1 to 72 (MSDKSIKMQA…SNGRITYRHK (72 aa)).

Belongs to the IF-1 family. In terms of assembly, component of the 30S ribosomal translation pre-initiation complex which assembles on the 30S ribosome in the order IF-2 and IF-3, IF-1 and N-formylmethionyl-tRNA(fMet); mRNA recruitment can occur at any time during PIC assembly.

The protein resides in the cytoplasm. In terms of biological role, one of the essential components for the initiation of protein synthesis. Stabilizes the binding of IF-2 and IF-3 on the 30S subunit to which N-formylmethionyl-tRNA(fMet) subsequently binds. Helps modulate mRNA selection, yielding the 30S pre-initiation complex (PIC). Upon addition of the 50S ribosomal subunit IF-1, IF-2 and IF-3 are released leaving the mature 70S translation initiation complex. The protein is Translation initiation factor IF-1 of Mycoplasmopsis pulmonis (strain UAB CTIP) (Mycoplasma pulmonis).